Reading from the N-terminus, the 305-residue chain is Aspartate carbamoyltransferase catalytic subunit (305 aa).

Carbamoyl phosphate contacts are provided by Arg-54 and Thr-55. Position 82 (Lys-82) interacts with L-aspartate. Carbamoyl phosphate-binding residues include Arg-104, His-132, and Gln-135. Positions 165 and 218 each coordinate L-aspartate. Carbamoyl phosphate is bound by residues Gly-259 and Pro-260.

Belongs to the aspartate/ornithine carbamoyltransferase superfamily. ATCase family. In terms of assembly, heterododecamer (2C3:3R2) of six catalytic PyrB chains organized as two trimers (C3), and six regulatory PyrI chains organized as three dimers (R2).

The catalysed reaction is carbamoyl phosphate + L-aspartate = N-carbamoyl-L-aspartate + phosphate + H(+). The protein operates within pyrimidine metabolism; UMP biosynthesis via de novo pathway; (S)-dihydroorotate from bicarbonate: step 2/3. Its function is as follows. Catalyzes the condensation of carbamoyl phosphate and aspartate to form carbamoyl aspartate and inorganic phosphate, the committed step in the de novo pyrimidine nucleotide biosynthesis pathway. The sequence is that of Aspartate carbamoyltransferase catalytic subunit from Caldicellulosiruptor bescii (strain ATCC BAA-1888 / DSM 6725 / KCTC 15123 / Z-1320) (Anaerocellum thermophilum).